Reading from the N-terminus, the 858-residue chain is DNA mismatch repair protein MutS (858 aa).

613–620 (GPNMAGKS) contacts ATP.

It belongs to the DNA mismatch repair MutS family.

Its function is as follows. This protein is involved in the repair of mismatches in DNA. It is possible that it carries out the mismatch recognition step. This protein has a weak ATPase activity. This is DNA mismatch repair protein MutS from Dehalococcoides mccartyi (strain CBDB1).